The following is a 432-amino-acid chain: Alcohol acyltransferase 9 (432 aa).

Catalysis depends on proton acceptor residues histidine 156 and aspartate 379.

This sequence belongs to the plant acyltransferase family.

The enzyme catalyses 2-(methylsulfanyl)acetyl-CoA + butan-1-ol = butyl 2-(methylsulfanyl)acetate + CoA. It catalyses the reaction ethanol + acetyl-CoA = ethyl acetate + CoA. The catalysed reaction is butan-1-ol + acetyl-CoA = butyl acetate + CoA. It carries out the reaction butan-1-ol + propanoyl-CoA = butyl propanoate + CoA. In terms of biological role, involved in the biosynthesis of volatile esters which confer kiwifruit flavor. Alcohol acyl transferase that can use a wide range of alcohols as substrate to produce esters. Exhibits acetyl-CoA:alcohol O-acyltransferase activity. This is Alcohol acyltransferase 9 from Actinidia chinensis var. chinensis (Chinese soft-hair kiwi).